The chain runs to 268 residues: Tryptophan synthase alpha chain (268 aa).

Catalysis depends on proton acceptor residues Glu-40 and Asp-51.

Belongs to the TrpA family. In terms of assembly, tetramer of two alpha and two beta chains.

It catalyses the reaction (1S,2R)-1-C-(indol-3-yl)glycerol 3-phosphate + L-serine = D-glyceraldehyde 3-phosphate + L-tryptophan + H2O. It functions in the pathway amino-acid biosynthesis; L-tryptophan biosynthesis; L-tryptophan from chorismate: step 5/5. The alpha subunit is responsible for the aldol cleavage of indoleglycerol phosphate to indole and glyceraldehyde 3-phosphate. The protein is Tryptophan synthase alpha chain of Geobacillus thermodenitrificans (strain NG80-2).